A 318-amino-acid chain; its full sequence is Acetyl-coenzyme A carboxylase carboxyl transferase subunit alpha (318 aa).

The region spanning Arg-43–Ser-293 is the CoA carboxyltransferase C-terminal domain.

Belongs to the AccA family. As to quaternary structure, acetyl-CoA carboxylase is a heterohexamer composed of biotin carboxyl carrier protein (AccB), biotin carboxylase (AccC) and two subunits each of ACCase subunit alpha (AccA) and ACCase subunit beta (AccD).

It is found in the cytoplasm. The enzyme catalyses N(6)-carboxybiotinyl-L-lysyl-[protein] + acetyl-CoA = N(6)-biotinyl-L-lysyl-[protein] + malonyl-CoA. Its pathway is lipid metabolism; malonyl-CoA biosynthesis; malonyl-CoA from acetyl-CoA: step 1/1. In terms of biological role, component of the acetyl coenzyme A carboxylase (ACC) complex. First, biotin carboxylase catalyzes the carboxylation of biotin on its carrier protein (BCCP) and then the CO(2) group is transferred by the carboxyltransferase to acetyl-CoA to form malonyl-CoA. The chain is Acetyl-coenzyme A carboxylase carboxyl transferase subunit alpha from Bartonella bacilliformis (strain ATCC 35685 / KC583 / Herrer 020/F12,63).